The chain runs to 205 residues: Ribosomal RNA small subunit methyltransferase G (205 aa).

S-adenosyl-L-methionine contacts are provided by residues G76, L81, I127–E128, and R140.

It belongs to the methyltransferase superfamily. RNA methyltransferase RsmG family.

It is found in the cytoplasm. It carries out the reaction guanosine(527) in 16S rRNA + S-adenosyl-L-methionine = N(7)-methylguanosine(527) in 16S rRNA + S-adenosyl-L-homocysteine. Functionally, specifically methylates the N7 position of guanine in position 527 of 16S rRNA. This is Ribosomal RNA small subunit methyltransferase G from Francisella tularensis subsp. novicida (strain U112).